The primary structure comprises 377 residues: MGLKMSESAKPYFAMVCLQFGYAGMNLVTKVVLDRGMSHYVLVAYRNAFATAAIAPFALLSERKVRPKMTFPIFMQIFVLALLGPLIDQNLYYAGLKLTSPTFAGAVTNIVPALTFIISIICRMEKVEMRKVRFQAKVVGTLVIVVGAMLMILFKIPLITFLRSHLTGHALSPAGEDYLKATVFLLIASFSWASFFVLQAATLKRYSSHLSLSTMVCFMGTLQSTALTFVMEPNLSAWNIGFDMNLLASAYAGIMSSSIAYYVQGMMTKQKSVIFVTAFNPLVVIIGSIIGFLILNQTLNLGGVLGMAILVVGVCTVLWGKEGDIDEEENIEEKFVEIVKCCNRCDIKVLSMMPRIDEEVDVEMQSAGTAKVAVGFS.

A run of 10 helical transmembrane segments spans residues 13 to 33 (FAMV…KVVL), 40 to 60 (YVLV…FALL), 67 to 87 (PKMT…GPLI), 102 to 122 (TFAG…SIIC), 142 to 162 (LVIV…ITFL), 183 to 203 (VFLL…AATL), 210 to 230 (LSLS…LTFV), 235 to 255 (LSAW…AGIM), 274 to 294 (IFVT…GFLI), and 299 to 319 (LNLG…TVLW). EamA domains are found at residues 22–152 (YAGM…MLMI) and 190–318 (FSWA…CTVL).

This sequence belongs to the drug/metabolite transporter (DMT) superfamily. Plant drug/metabolite exporter (P-DME) (TC 2.A.7.4) family.

Its subcellular location is the membrane. This is WAT1-related protein At3g56620 from Arabidopsis thaliana (Mouse-ear cress).